Here is a 983-residue protein sequence, read N- to C-terminus: Isoleucine--tRNA ligase (983 aa).

A 'HIGH' region motif is present at residues 61-71 (PYANGELHVGH). Residue glutamate 608 participates in L-isoleucyl-5'-AMP binding. The 'KMSKS' region signature appears at 649–653 (KMSKS). Lysine 652 lines the ATP pocket. Zn(2+) is bound by residues cysteine 952, cysteine 955, cysteine 972, and cysteine 975.

It belongs to the class-I aminoacyl-tRNA synthetase family. IleS type 1 subfamily. As to quaternary structure, monomer. The cofactor is Zn(2+).

Its subcellular location is the cytoplasm. It carries out the reaction tRNA(Ile) + L-isoleucine + ATP = L-isoleucyl-tRNA(Ile) + AMP + diphosphate. Its function is as follows. Catalyzes the attachment of isoleucine to tRNA(Ile). As IleRS can inadvertently accommodate and process structurally similar amino acids such as valine, to avoid such errors it has two additional distinct tRNA(Ile)-dependent editing activities. One activity is designated as 'pretransfer' editing and involves the hydrolysis of activated Val-AMP. The other activity is designated 'posttransfer' editing and involves deacylation of mischarged Val-tRNA(Ile). The polypeptide is Isoleucine--tRNA ligase (Gloeobacter violaceus (strain ATCC 29082 / PCC 7421)).